A 136-amino-acid chain; its full sequence is Ribulose bisphosphate carboxylase small subunit, chloroplastic 1 (136 aa).

The transit peptide at 1–13 directs the protein to the chloroplast; it reads NTDITSNGERVKC.

The protein belongs to the RuBisCO small chain family. In terms of assembly, heterohexadecamer of 8 large and 8 small subunits.

The protein localises to the plastid. The protein resides in the chloroplast. RuBisCO catalyzes two reactions: the carboxylation of D-ribulose 1,5-bisphosphate, the primary event in carbon dioxide fixation, as well as the oxidative fragmentation of the pentose substrate. Both reactions occur simultaneously and in competition at the same active site. Although the small subunit is not catalytic it is essential for maximal activity. The protein is Ribulose bisphosphate carboxylase small subunit, chloroplastic 1 of Pisum sativum (Garden pea).